The following is a 234-amino-acid chain: MAKLTKRMRVIREKVDATKQYDINEAIALLKELATAKFNESVDVAVNLGIDARKSDQNVRGATVLPHGTGRSVRVAVFTQGPNAEAAKAAGAELVGMEDLADQIKKGEMNFDVVIASPDAMRVVGQLGQVLGPRGLMPNPKVGTVTPNVAEAVKNAKAGQVRYRNDKNGIIHTTIGKVDFDADKLKENLEALLVALKKAKPSQAKGVYIKKVSISTTMGAGVAVDQAGLSASAN.

This sequence belongs to the universal ribosomal protein uL1 family. In terms of assembly, part of the 50S ribosomal subunit.

Functionally, binds directly to 23S rRNA. The L1 stalk is quite mobile in the ribosome, and is involved in E site tRNA release. Its function is as follows. Protein L1 is also a translational repressor protein, it controls the translation of the L11 operon by binding to its mRNA. This chain is Large ribosomal subunit protein uL1, found in Salmonella agona (strain SL483).